A 477-amino-acid polypeptide reads, in one-letter code: Aspartyl/glutamyl-tRNA(Asn/Gln) amidotransferase subunit B (477 aa).

This sequence belongs to the GatB/GatE family. GatB subfamily. In terms of assembly, heterotrimer of A, B and C subunits.

It catalyses the reaction L-glutamyl-tRNA(Gln) + L-glutamine + ATP + H2O = L-glutaminyl-tRNA(Gln) + L-glutamate + ADP + phosphate + H(+). The catalysed reaction is L-aspartyl-tRNA(Asn) + L-glutamine + ATP + H2O = L-asparaginyl-tRNA(Asn) + L-glutamate + ADP + phosphate + 2 H(+). Allows the formation of correctly charged Asn-tRNA(Asn) or Gln-tRNA(Gln) through the transamidation of misacylated Asp-tRNA(Asn) or Glu-tRNA(Gln) in organisms which lack either or both of asparaginyl-tRNA or glutaminyl-tRNA synthetases. The reaction takes place in the presence of glutamine and ATP through an activated phospho-Asp-tRNA(Asn) or phospho-Glu-tRNA(Gln). The polypeptide is Aspartyl/glutamyl-tRNA(Asn/Gln) amidotransferase subunit B (Legionella pneumophila (strain Paris)).